Consider the following 416-residue polypeptide: MSGHRSTRKRCGDSHPESPVGFGHMSTTGCVLNKLFQLPTPPLSRHQLKRLEEHRYQSAGRSLLEPLMQGYWEWLVGRVPSWIAPNLITIIGLSINICTTILLVFYCPTATEQAPLWAYIACACGLFIYQSLDAIDGKQARRTNSSSPLGELFDHGCDSLSTVFVVLGTCIAVQLGTNPDWMFFCCFAGTFMFYCAHWQTYVSGTLRFGIIDVTEVQIFIIIMHLLAVIGGPPFWQSMIPVLNIQMKLLPALCTVAGTIFSCTNYFRVIFTGGVGKNGSTIAGTSVLSPFLHIGSVITLAVMIYKKSAVQLFEKHPCLYILTFGFVSAKITNKLVVAHMTKSEMHLHDTAFIGPALLFLDQYFNSFIDEYIVLWIALIFSFFDLIRYCVSVCNQIASHLHIHVFRIKASTAHSNHH.

The tract at residues 1–20 is disordered; sequence MSGHRSTRKRCGDSHPESPV. S18 bears the Phosphoserine mark. T40 is modified (phosphothreonine). N86 lines the CDP-choline pocket. 2 helical membrane-spanning segments follow: residues 89–108 and 116–133; these read TIIG…FYCP and LWAY…QSLD. D133 serves as a coordination point for Mg(2+). N-linked (GlcNAc...) asparagine glycosylation is present at N144. A CDP-choline-binding site is contributed by E151. A Mg(2+)-binding site is contributed by D154. H155 (proton acceptor) is an active-site residue. 8 helical membrane passes run 156-176, 180-199, 210-230, 246-267, 286-306, 315-334, 349-363, and 368-388; these read GCDS…VQLG, DWMF…AHWQ, IIDV…AVIG, MKLL…NYFR, VLSP…IYKK, HPCL…TNKL, TAFI…DQYF, and DEYI…IRYC. D158 is a Mg(2+) binding site.

Belongs to the CDP-alcohol phosphatidyltransferase class-I family. As to quaternary structure, homodimer. Mg(2+) serves as cofactor. Requires Mn(2+) as cofactor.

It localises to the endoplasmic reticulum membrane. It is found in the nucleus membrane. It carries out the reaction CDP-ethanolamine + a 1,2-diacyl-sn-glycerol = a 1,2-diacyl-sn-glycero-3-phosphoethanolamine + CMP + H(+). The catalysed reaction is CDP-choline + a 1,2-diacyl-sn-glycerol = a 1,2-diacyl-sn-glycero-3-phosphocholine + CMP + H(+). The enzyme catalyses 1-O-alkyl-2-acyl-sn-glycerol + CDP-choline = a 1-O-alkyl-2-acyl-sn-glycero-3-phosphocholine + CMP + H(+). It catalyses the reaction a 1-O-(1Z-alkenyl)-2-acyl-sn-glycerol + CDP-choline = a 1-O-(1Z-alkenyl)-2-acyl-sn-glycero-3-phosphocholine + CMP + H(+). It carries out the reaction 1,2-dioctanoyl-sn-glycerol + CDP-choline = 1,2-dioctanoyl-sn-glycero-3-phosphocholine + CMP + H(+). The catalysed reaction is 1,2-didecanoyl-sn-glycerol + CDP-choline = 1,2-didecanoyl-sn-glycero-3-phosphocholine + CMP + H(+). The enzyme catalyses CDP-choline + 1,2-di-(9Z-octadecenoyl)-sn-glycerol = 1,2-di-(9Z-octadecenoyl)-sn-glycero-3-phosphocholine + CMP + H(+). It catalyses the reaction 1-hexadecanoyl-2-(9Z-octadecenoyl)-sn-glycerol + CDP-choline = 1-hexadecanoyl-2-(9Z-octadecenoyl)-sn-glycero-3-phosphocholine + CMP + H(+). It carries out the reaction CDP-ethanolamine + 1,2-di-(9Z-octadecenoyl)-sn-glycerol = 1,2-di-(9Z-octadecenoyl)-sn-glycero-3-phosphoethanolamine + CMP + H(+). The catalysed reaction is 1-hexadecanoyl-2-(9Z-octadecenoyl)-sn-glycerol + CDP-ethanolamine = 1-hexadecanoyl-2-(9Z-octadecenoyl)-sn-glycero-3-phosphoethanolamine + CMP + H(+). The enzyme catalyses 1-hexadecanoyl-2-(4Z,7Z,10Z,13Z,16Z,19Z-docosahexaenoyl)-sn-glycerol + CDP-choline = 1-hexadecanoyl-2-(4Z,7Z,10Z,13Z,16Z,19Z-docosahexaenoyl)-sn-glycero-3-phosphocholine + CMP + H(+). It catalyses the reaction 1,2-di-(9Z-hexadecenoyl)-sn-glycerol + CDP-choline = 1,2-di-(9Z-hexadecenoyl)-sn-glycero-3-phosphocholine + CMP + H(+). It carries out the reaction 1,2-di-(9Z-hexadecenoyl)-sn-glycerol + CDP-ethanolamine = 1,2-di-(9Z-hexadecenoyl)-sn-glycero-3-phosphoethanolamine + CMP + H(+). The catalysed reaction is 1-O-hexadecyl-2-acetyl-sn-glycerol + CDP-choline = 1-O-hexadecyl-2-acetyl-sn-glycero-3-phosphocholine + CMP + H(+). The enzyme catalyses 1-O-hexadecyl-2-(5Z,8Z,11Z,14Z-eicosatetraenoyl)-sn-glycerol + CDP-choline = 1-O-hexadecyl-2-(5Z,8Z,11Z,14Z)-eicosatetraenoyl-sn-glycero-3-phosphocholine + CMP + H(+). It participates in phospholipid metabolism; phosphatidylethanolamine biosynthesis; phosphatidylethanolamine from ethanolamine: step 3/3. It functions in the pathway phospholipid metabolism; phosphatidylcholine biosynthesis; phosphatidylcholine from phosphocholine: step 2/2. Its function is as follows. Catalyzes both phosphatidylcholine and phosphatidylethanolamine biosynthesis from CDP-choline and CDP-ethanolamine, respectively. Involved in protein-dependent process of phospholipid transport to distribute phosphatidyl choline to the lumenal surface. Has a higher cholinephosphotransferase activity than ethanolaminephosphotransferase activity. The polypeptide is Choline/ethanolaminephosphotransferase 1 (Mus musculus (Mouse)).